Reading from the N-terminus, the 202-residue chain is Chromophore lyase CpcT/CpeT 2 (202 aa).

Belongs to the CpcT/CpeT biliprotein lyase family.

Its function is as follows. Covalently attaches a chromophore to Cys residue(s) of phycobiliproteins. The polypeptide is Chromophore lyase CpcT/CpeT 2 (Gloeobacter violaceus (strain ATCC 29082 / PCC 7421)).